The chain runs to 381 residues: G-protein coupled receptor homolog Q2/3L (381 aa).

At 1-91 the chain is on the extracellular side; that stretch reads MNYTLSTVSS…HCDDGVDTTS (91 aa). Residues Asn2, Asn15, Asn19, Asn41, Asn50, Asn56, and Asn62 are each glycosylated (N-linked (GlcNAc...) asparagine; by host). The chain crosses the membrane as a helical span at residues 92-112; that stretch reads FGLITLYSTIFFLGLFGNIIV. The Cytoplasmic segment spans residues 113-126; sequence LTVLRKYKIKTIQD. A helical transmembrane segment spans residues 127–147; that stretch reads MFLLNLTLSDLIFVLVFPFNL. The Extracellular segment spans residues 148-165; it reads YDSIAKQWSLGDCLCKFK. Residues 166–186 traverse the membrane as a helical segment; it reads AMFYFVGFYNSMSFITLMSID. At 187–206 the chain is on the cytoplasmic side; it reads RYLAVVHPVKSMPIRTKRYG. The chain crosses the membrane as a helical span at residues 207 to 227; sequence IVLSMVVWIVSTIESFPIMLF. The Extracellular segment spans residues 228–251; the sequence is YETKKVYGITYCHVFYNDNAKIWK. A helical transmembrane segment spans residues 252–272; it reads LFINFEINIFGMIIPLTILLY. Residues 273–294 are Cytoplasmic-facing; it reads CYYKILNTLKTSQTKNKKAIKM. A helical membrane pass occupies residues 295 to 315; that stretch reads VFLIVICSVLFLLPFSVTVFV. The Extracellular portion of the chain corresponds to 316–336; the sequence is SSLYLLNVFSGCMALRFVNLA. The chain crosses the membrane as a helical span at residues 337–357; that stretch reads VHVAEIVSLCHCFINPLIYAF. Residues 358-381 lie on the Cytoplasmic side of the membrane; that stretch reads CSREFTKKLLRLRTTSSAGSISIG.

The protein belongs to the G-protein coupled receptor 1 family.

It localises to the host cell membrane. Functionally, putative chemokine receptor. The polypeptide is G-protein coupled receptor homolog Q2/3L (Ovis aries (Sheep)).